The primary structure comprises 119 residues: Ribonuclease P protein component (119 aa).

It belongs to the RnpA family. In terms of assembly, consists of a catalytic RNA component (M1 or rnpB) and a protein subunit.

It carries out the reaction Endonucleolytic cleavage of RNA, removing 5'-extranucleotides from tRNA precursor.. Its function is as follows. RNaseP catalyzes the removal of the 5'-leader sequence from pre-tRNA to produce the mature 5'-terminus. It can also cleave other RNA substrates such as 4.5S RNA. The protein component plays an auxiliary but essential role in vivo by binding to the 5'-leader sequence and broadening the substrate specificity of the ribozyme. This chain is Ribonuclease P protein component, found in Mycobacterium avium (strain 104).